We begin with the raw amino-acid sequence, 233 residues long: Phosphoribosylformylglycinamidine synthase subunit PurQ (233 aa).

Positions 3–233 (SAILVFPGIN…GLVEHLAKAA (231 aa)) constitute a Glutamine amidotransferase type-1 domain. Catalysis depends on Cys87, which acts as the Nucleophile. Active-site residues include His204 and Glu206.

As to quaternary structure, part of the FGAM synthase complex composed of 1 PurL, 1 PurQ and 2 PurS subunits.

The protein resides in the cytoplasm. It carries out the reaction N(2)-formyl-N(1)-(5-phospho-beta-D-ribosyl)glycinamide + L-glutamine + ATP + H2O = 2-formamido-N(1)-(5-O-phospho-beta-D-ribosyl)acetamidine + L-glutamate + ADP + phosphate + H(+). The enzyme catalyses L-glutamine + H2O = L-glutamate + NH4(+). It participates in purine metabolism; IMP biosynthesis via de novo pathway; 5-amino-1-(5-phospho-D-ribosyl)imidazole from N(2)-formyl-N(1)-(5-phospho-D-ribosyl)glycinamide: step 1/2. Its function is as follows. Part of the phosphoribosylformylglycinamidine synthase complex involved in the purines biosynthetic pathway. Catalyzes the ATP-dependent conversion of formylglycinamide ribonucleotide (FGAR) and glutamine to yield formylglycinamidine ribonucleotide (FGAM) and glutamate. The FGAM synthase complex is composed of three subunits. PurQ produces an ammonia molecule by converting glutamine to glutamate. PurL transfers the ammonia molecule to FGAR to form FGAM in an ATP-dependent manner. PurS interacts with PurQ and PurL and is thought to assist in the transfer of the ammonia molecule from PurQ to PurL. The protein is Phosphoribosylformylglycinamidine synthase subunit PurQ of Rhodopseudomonas palustris (strain BisB18).